Consider the following 461-residue polypeptide: Cyclic AMP-responsive element-binding protein 3-like protein 3 (461 aa).

Residues 1 to 322 (MNTDLAAGKM…STSKSAQTGT (322 aa)) lie on the Cytoplasmic side of the membrane. A disordered region spans residues 51–120 (DQQVLPNPDS…AGCHPAQPGK (70 aa)). The segment covering 63 to 85 (FLSSILGSGDSLPSSPLWSPEGS) has biased composition (low complexity). Position 173 is a phosphoserine (Ser173). Residues 243–306 (VLKKIRRKIR…LSLLEQLKKL (64 aa)) form the bZIP domain. Residues 245–274 (KKIRRKIRNKQSAQESRKKKKEYIDGLETR) are basic motif. The interval 285-306 (LQRKVLHLEKQNLSLLEQLKKL) is leucine-zipper. Lys294 is covalently cross-linked (Glycyl lysine isopeptide (Lys-Gly) (interchain with G-Cter in ubiquitin)). Residues 323–343 (CVAVLLLSFALIILPSISPFG) traverse the membrane as a helical; Signal-anchor for type II membrane protein segment. Residues 344–461 (PNKTESPGDF…AGLEAAGDEL (118 aa)) are Lumenal-facing. The tract at residues 370–408 (RVAADAVPGSEAPGPRPEADTTREESPGSPGADWGFQDT) is disordered. O-linked (GalNAc...) serine glycosylation is present at Ser379. Residues 386 to 395 (PEADTTREES) show a composition bias toward basic and acidic residues. Asn410, Asn413, Asn420, and Asn427 each carry an N-linked (GlcNAc...) asparagine glycan. Residues 442–461 (APGPSTGSGRAGLEAAGDEL) are disordered.

It belongs to the bZIP family. ATF subfamily. In terms of assembly, binds DNA as a dimer. May form homodimers. Interacts with ATF6. Interacts with SYNV1/HRD1; this interaction leads to CREB3L3 ubiquitination and proteasomal degradation. Post-translationally, controlled by regulated intramembrane proteolysis (RIP). Following ER stress a fragment containing the cytoplasmic transcription factor domain is released by proteolysis. The cleavage seems to be performed sequentially by site-1 and site-2 proteases (PS1 and PS2). In terms of processing, N- and O-glycosylated. N-glycosylation is required for optimal proteolytic activation. O-glycosylated with core 1 or possibly core 8 glycans. Ubiquitinated at Lys-294 by SYNV1/HRD1 via 'Lys-27'-linked ubiquitin. As to expression, exclusively expressed in liver. Underexpressed in hepatocellular carcinoma tissues.

The protein resides in the endoplasmic reticulum membrane. Its subcellular location is the nucleus. Its function is as follows. Transcription factor that may act during endoplasmic reticulum stress by activating unfolded protein response target genes. Activated in response to cAMP stimulation. In vitro, binds to the cAMP response element (CRE) and box-B element. Activates transcription through box-B element. Activates transcription through CRE. May function synergistically with ATF6. In acute inflammatory response, may activate expression of acute phase response (APR) genes. May be involved in growth suppression. Regulates FGF21 transcription. Plays a crucial role in the regulation of triglyceride metabolism and is required for the maintenance of normal plasma triglyceride concentrations. This is Cyclic AMP-responsive element-binding protein 3-like protein 3 (CREB3L3) from Homo sapiens (Human).